We begin with the raw amino-acid sequence, 243 residues long: Triosephosphate isomerase (243 aa).

9–11 is a substrate binding site; it reads NWK. The active-site Electrophile is the His-96. The Proton acceptor role is filled by Glu-165. Substrate is bound by residues Gly-171, Ser-204, and 225-226; that span reads GG.

The protein belongs to the triosephosphate isomerase family. In terms of assembly, homodimer.

The protein resides in the cytoplasm. The enzyme catalyses D-glyceraldehyde 3-phosphate = dihydroxyacetone phosphate. It participates in carbohydrate biosynthesis; gluconeogenesis. Its pathway is carbohydrate degradation; glycolysis; D-glyceraldehyde 3-phosphate from glycerone phosphate: step 1/1. In terms of biological role, involved in the gluconeogenesis. Catalyzes stereospecifically the conversion of dihydroxyacetone phosphate (DHAP) to D-glyceraldehyde-3-phosphate (G3P). The protein is Triosephosphate isomerase of Synechococcus sp. (strain CC9902).